The chain runs to 317 residues: Melanocyte-stimulating hormone receptor (317 aa).

Residues 1–37 are Extracellular-facing; sequence MPVQGSQRRLLGSLNSTPTATPHLGLAANQTGAWCLE. A glycan (N-linked (GlcNAc...) asparagine) is linked at N29. Residues 38–63 form a helical membrane-spanning segment; sequence VSIPDGLFLSLGLVSLVENVLVVTAI. Topologically, residues 64 to 72 are cytoplasmic; it reads AKNRNLHSP. A helical transmembrane segment spans residues 73–93; the sequence is MYCFICCLALSDLLVSGSNML. The Extracellular segment spans residues 94 to 118; sequence ETAVTLLLEAGALAARAAVVQQLDN. The helical transmembrane segment at 119–140 threads the bilayer; sequence VIDVITCSSMLSSLCFLGAIAV. Residues 141 to 163 are Cytoplasmic-facing; the sequence is DRYISIFYALRYHSIVTLPRARR. The chain crosses the membrane as a helical span at residues 164–183; the sequence is AVAAIWVASVLFSMLFIAYY. Topologically, residues 184-191 are extracellular; sequence DHAAVLLC. A helical transmembrane segment spans residues 192–211; the sequence is LVVFFLAMLVLMAVLYVHML. The Cytoplasmic segment spans residues 212-240; it reads ARACQHAQGIARLHKRQRPAHQGFGLKGA. Residues 241–266 form a helical membrane-spanning segment; that stretch reads ATLTILLGIFFLCWGPFFLHLTLIVL. Over 267-279 the chain is Extracellular; that stretch reads CPQHPTCSCIFKN. A helical membrane pass occupies residues 280-300; the sequence is FNLFLALIICNAIIDPLIYAF. Residues 301-317 are Cytoplasmic-facing; it reads RSQELRRTLKEVLLCSW. C315 carries the S-palmitoyl cysteine lipid modification.

This sequence belongs to the G-protein coupled receptor 1 family. Interacts with MGRN1, but does not undergo MGRN1-mediated ubiquitination; this interaction competes with GNAS-binding and thus inhibits agonist-induced cAMP production. Interacts with OPN3; the interaction results in a decrease in MC1R-mediated cAMP signaling and ultimately a decrease in melanin production in melanocytes.

The protein localises to the cell membrane. Its function is as follows. Receptor for MSH (alpha, beta and gamma) and ACTH. The activity of this receptor is mediated by G proteins which activate adenylate cyclase. Mediates melanogenesis, the production of eumelanin (black/brown) and phaeomelanin (red/yellow), via regulation of cAMP signaling in melanocytes. The protein is Melanocyte-stimulating hormone receptor (MC1R) of Allenopithecus nigroviridis (Allen's swamp monkey).